We begin with the raw amino-acid sequence, 92 residues long: Small ribosomal subunit protein uS19 (92 aa).

It belongs to the universal ribosomal protein uS19 family.

Functionally, protein S19 forms a complex with S13 that binds strongly to the 16S ribosomal RNA. This is Small ribosomal subunit protein uS19 from Francisella philomiragia subsp. philomiragia (strain ATCC 25017 / CCUG 19701 / FSC 153 / O#319-036).